The primary structure comprises 127 residues: Large-conductance mechanosensitive channel (127 aa).

The next 2 helical transmembrane spans lie at 14–34 and 69–89; these read VLDL…VKSL and GAFL…FLIV.

The protein belongs to the MscL family. In terms of assembly, homopentamer.

It localises to the cell membrane. Channel that opens in response to stretch forces in the membrane lipid bilayer. May participate in the regulation of osmotic pressure changes within the cell. The sequence is that of Large-conductance mechanosensitive channel from Leuconostoc mesenteroides subsp. mesenteroides (strain ATCC 8293 / DSM 20343 / BCRC 11652 / CCM 1803 / JCM 6124 / NCDO 523 / NBRC 100496 / NCIMB 8023 / NCTC 12954 / NRRL B-1118 / 37Y).